Consider the following 136-residue polypeptide: DNA-directed RNA polymerase subunit omega (136 aa).

The protein belongs to the RNA polymerase subunit omega family. As to quaternary structure, the RNAP catalytic core consists of 2 alpha, 1 beta, 1 beta' and 1 omega subunit. When a sigma factor is associated with the core the holoenzyme is formed, which can initiate transcription.

The enzyme catalyses RNA(n) + a ribonucleoside 5'-triphosphate = RNA(n+1) + diphosphate. Functionally, promotes RNA polymerase assembly. Latches the N- and C-terminal regions of the beta' subunit thereby facilitating its interaction with the beta and alpha subunits. The protein is DNA-directed RNA polymerase subunit omega of Acidiphilium cryptum (strain JF-5).